The primary structure comprises 630 residues: Low affinity heme transporter str3 (630 aa).

Residues 1–26 (MEAKETHSISDHEVELQDAKPEEKSE) are compositionally biased toward basic and acidic residues. The disordered stretch occupies residues 1-51 (MEAKETHSISDHEVELQDAKPEEKSENGNFVFEKAFSSDEEKGSGYNTNET). The Cytoplasmic segment spans residues 1–79 (MEAKETHSIS…VRDSIYQNKR (79 aa)). 2 positions are modified to phosphoserine: Ser-10 and Ser-38. The chain crosses the membrane as a helical span at residues 80 to 100 (GMYLAYAFGIAILACSWASAI). Residues 101–120 (QSSTTYSYQVYATASFNRTS) lie on the Extracellular side of the membrane. A helical transmembrane segment spans residues 121-141 (MISTLEIATAIISSVCKPILG). Over 142-154 (KFSDITSRPMTYT) the chain is Cytoplasmic. Residues 155-175 (LVLLFYVIGFIVVASSSTISA) traverse the membrane as a helical segment. Tyr-176 is a topological domain (extracellular). A helical transmembrane segment spans residues 177–197 (VIGSVFISIGSSGLDYLNTLV). Residues 198–208 (VGDLTSLKWRG) are Cytoplasmic-facing. The helical transmembrane segment at 209–229 (FMTALLSTPYIATVWFTGFIV) threads the bilayer. The Extracellular portion of the chain corresponds to 230–241 (QGIIDSNWRWGY). Residues 242–262 (GMFAIIMPAVMTPAVIILMYL) traverse the membrane as a helical segment. At 263–302 (ERQANKDENIKKIINYQTEEKNKNKQSKWQKLWKAVLEVD) the chain is on the cytoplasmic side. Residues 303-323 (LFGLILLGVGWSILLLPFSLT) form a helical membrane-spanning segment. The Extracellular segment spans residues 324–335 (SYAKNGWKNPSM). The chain crosses the membrane as a helical span at residues 336–356 (IAMMVVGGVILIAYSGYEMFI). Topologically, residues 357–370 (APYPSCPRRVMNRT) are cytoplasmic. Residues 371 to 391 (FITAVIIDFFYYLAGYLQSMY) form a helical membrane-spanning segment. Over 392 to 406 (FTTYTWILYDWSYRD) the chain is Extracellular. The chain crosses the membrane as a helical span at residues 407 to 427 (WTYFNNTMTIALCVFGVFAGA). The Cytoplasmic portion of the chain corresponds to 428–439 (MHRVFHRYKYLQ). The helical transmembrane segment at 440–460 (IIGLVIKIVGYGILIRPNFAA) threads the bilayer. The Extracellular portion of the chain corresponds to 461 to 465 (TGKVD). The chain crosses the membrane as a helical span at residues 466–486 (LAWSLILIGMGGSFSVVGSQV). Topologically, residues 487-502 (SCQASVPHQDLAIASS) are cytoplasmic. A helical membrane pass occupies residues 503 to 523 (LLPLYTNIGGAIGAAIASPIF). Residues 522-576 (IFSNKVPKYLREYLPSSINDTQVYNFYSDSSLIREYPVGTEIRDGAIKAYSRSMF) are heme binding. Over 524–574 (SNKVPKYLREYLPSSINDTQVYNFYSDSSLIREYPVGTEIRDGAIKAYSRS) the chain is Extracellular. Residues 575–595 (MFFLLVPAVSLSFIPLAAAFW) form a helical membrane-spanning segment. The Cytoplasmic segment spans residues 596–630 (QSNFYLGNQQNAVEGDQDHKKKGDKETTQEEKIII). The disordered stretch occupies residues 610–630 (GDQDHKKKGDKETTQEEKIII). Positions 611–630 (DQDHKKKGDKETTQEEKIII) are enriched in basic and acidic residues.

The protein belongs to the major facilitator superfamily.

The protein resides in the cell membrane. Functionally, low affinity heme transporter involved in the assimilation of exogenous heme during conditions of low cellular iron. In Schizosaccharomyces pombe (strain 972 / ATCC 24843) (Fission yeast), this protein is Low affinity heme transporter str3.